A 173-amino-acid polypeptide reads, in one-letter code: MTTIVSVRRGRQVALGGDGQVTLGAVVAKASARKVRRLYHDKVLAGFAGGTADAFTLFERFEAKLEKHQGHLLRSAVELAKDWRTDRILRRLEAMLVVADHEATLIITGAGDVIEPEQGLAAIGSGGAYAQAAARALLENTNLGPAETVAKALTIAGDICIYTNQVHVIEQLD.

Residue threonine 2 is part of the active site. The Na(+) site is built by glycine 157, cysteine 160, and threonine 163.

This sequence belongs to the peptidase T1B family. HslV subfamily. A double ring-shaped homohexamer of HslV is capped on each side by a ring-shaped HslU homohexamer. The assembly of the HslU/HslV complex is dependent on binding of ATP.

Its subcellular location is the cytoplasm. The catalysed reaction is ATP-dependent cleavage of peptide bonds with broad specificity.. Its activity is regulated as follows. Allosterically activated by HslU binding. Its function is as follows. Protease subunit of a proteasome-like degradation complex believed to be a general protein degrading machinery. The chain is ATP-dependent protease subunit HslV from Nitrosomonas eutropha (strain DSM 101675 / C91 / Nm57).